Here is a 471-residue protein sequence, read N- to C-terminus: MVIRSGKTNLNPPCALMAPSSSCDCIIVGSGLSGLIAARNLSRVNYSVLVIEAQERLGGRMYGEYLPSGQWIDRGGQWVGPTQDRFLALLNEYNIERFPSPADGLKVLLFDGKRYEFDGFFQGVFQGEAPKISSDEWNDAMVAWEKFNTLAQSLDEQHPEATPENKKLDSQTFADWIKENTHTAFGHWYFSYMCRAVGFLGPAEPSQVSLLHILWGHKSASQGENPEAELLHGGAGQIPQKIAAELGNSILLGEPVIHIAQDDKGVEVTTTTGKYQGKFAIVATPPHLAGRITYSPPMPPLRQQLTQRVPMGTCCKLLISYDRPFWREKGLAGIGLGNTTWIELCADSSDPTTGVGVIASFVVGDRYGKWIAMGEAERRQGVLSDLALYFGEEALSPETYDEVDWPSEQWVGGGYAAFMPPGVWTSFGQALSAPVGRIHWAGTEIAPRWAGFFDGAIRTGEAAAKAIIGLL.

A Mg(2+)-binding site is contributed by glycine 31. Serine 33 provides a ligand contact to FAD. A Mg(2+)-binding site is contributed by glycine 34. FAD is bound by residues glutamate 52, arginine 60, and valine 256. Position 283 (alanine 283) interacts with Mg(2+). Phenylalanine 453 contributes to the FAD binding site.

The protein belongs to the flavin monoamine oxidase family. The cofactor is FAD. It depends on Mg(2+) as a cofactor.

It is found in the cellular thylakoid membrane. The catalysed reaction is a plastoquinone + an L-alpha-amino acid + H2O = a plastoquinol + a 2-oxocarboxylate + NH4(+). It catalyses the reaction a plastoquinone + L-arginine + H2O = a plastoquinol + 5-guanidino-2-oxopentanoate + NH4(+). It participates in amino-acid degradation; L-arginine degradation. Its activity is regulated as follows. Inhibited by Ca(2+) and other cations such as Ni(2+), Co(2+) and Zn(2+). The inhibition by o-phenanthroline and salicylhydroxamic acid suggests the presence of a metal cofactor besides FAD in the enzyme. The L-arginine-stimulated O(2) consumption involving slr0782 is inhibited by inhibitors of the respiratory electron transport chain, such as KCN and 2,5-dibromo-3-methyl-6-isopropyl-p-benzoquinone, which indicates a participation of the cytochrome b6/f complex and of a cytochrome oxidase. L-amino acid dehydrogenase with broad substrate specificity. Catalyzes the oxidative deamination of various L-amino acids, L-Arg and L-Cys being the best substrates in vitro. Likely functions mainly as an L-arginine dehydrogenase in vivo. Probably feeds electrons from L-arginine oxidation and also from the oxidation of other L-amino acids into the respiratory electron transport chain associated to the thylakoid membrane, and does not directly interact with molecular oxygen but donates electrons to the plastoquinone pool. Cannot use D-amino acids as substrates. This Synechocystis sp. (strain ATCC 27184 / PCC 6803 / Kazusa) protein is L-amino acid dehydrogenase.